The sequence spans 88 residues: Small integral membrane protein 13 (88 aa).

The helical transmembrane segment at leucine 10 to valine 30 threads the bilayer. A compositionally biased stretch (polar residues) spans threonine 48 to serine 61. The interval threonine 48–histidine 88 is disordered. Residues serine 59 and serine 61 each carry the phosphoserine modification. Position 63 is a phosphothreonine (threonine 63). Serine 70 bears the Phosphoserine mark.

Belongs to the SMIM13 family.

It is found in the membrane. This Mus musculus (Mouse) protein is Small integral membrane protein 13 (Smim13).